The chain runs to 923 residues: Progesterone receptor (923 aa).

Over residues 1-11 the composition is skewed to basic and acidic residues; it reads MTELQAKDPRT. A disordered region spans residues 1–49; it reads MTELQAKDPRTLHTSGAAPSPTHVGSPLLARLDPDPFQGSQHSDASSVV. Residues 1 to 164 are AF3; mediates transcriptional activation (in isoform B); sequence MTELQAKDPR…PATKGLLSPL (164 aa). A modulating, Pro-Rich region spans residues 1-556; that stretch reads MTELQAKDPR…YGFDSLPQKI (556 aa). A Glycyl lysine isopeptide (Lys-Gly) (interchain with G-Cter in SUMO) cross-link involves residue Lys7. Ser20 carries the post-translational modification Phosphoserine. The segment covering 38–49 has biased composition (polar residues); it reads QGSQHSDASSVV. The LXXL motif 1 signature appears at 56–60; that stretch reads LDRLL. Residues 67–111 form a disordered region; sequence AQELPDEKTQNQQSLSDVEGAFSGVEASRRRSRNPRAPEKDSRLL. Phosphoserine is present on Ser82. The short motif at 115–119 is the LXXL motif 2 element; the sequence is LDTLL. A phosphoserine mark is found at Ser130 and Ser162. Residues 152–239 form a disordered region; sequence RSVPATKGLL…EGSAGPLLKS (88 aa). The interval 165-304 is mediates transcriptional transrepression (in isoform A); sequence MSRPESKAGD…LATTVVDFIH (140 aa). The short motif at 184–188 is the Nuclear localization signal element; it reads VLPKA. Residues Ser190 and Ser213 each carry the phosphoserine modification. Ser293 carries the phosphoserine; by MAPK1 modification. The tract at residues 333–371 is disordered; sequence AAQVPFAPPRGSPSAPSPPVPCGDFPDCTYPPEGDPKED. Over residues 338–353 the composition is skewed to pro residues; it reads FAPPRGSPSAPSPPVP. A Phosphoserine; by MAPK modification is found at Ser344. Lys387 participates in a covalent cross-link: Glycyl lysine isopeptide (Lys-Gly) (interchain with G-Cter in SUMO); alternate. Lys387 participates in a covalent cross-link: Glycyl lysine isopeptide (Lys-Gly) (interchain with G-Cter in ubiquitin); alternate. The residue at position 399 (Ser399) is a Phosphoserine; by CDK2. The disordered stretch occupies residues 412 to 435; that stretch reads TFPDFPLPPRPPRAPPSRPGEAAV. Positions 416–429 are enriched in pro residues; sequence FPLPPRPPRAPPSR. The segment at 450–536 is AF1; mediates transcriptional activation; it reads SALECILYKA…VYPPYLNYLR (87 aa). Lys521 participates in a covalent cross-link: Glycyl lysine isopeptide (Lys-Gly) (interchain with G-Cter in SUMO). 2 consecutive NR C4-type zinc fingers follow at residues 557-577 and 593-617; these read CLICGDEASGCHYGVLTCGSC and CAGRNDCIVDKIRRKNCPACRLRKC. Residues 557 to 629 constitute a DNA-binding region (nuclear receptor); sequence CLICGDEASG…AGMVLGGRKF (73 aa). Ser666 carries the phosphoserine modification. The NR LBD domain maps to 669 to 903; that stretch reads QEIQLVPPLI…EFPEMMSEVI (235 aa). An AF2; mediates transcriptional activation region spans residues 677-923; that stretch reads LINLLMSIEP…MVKPLLFHKK (247 aa). Residue Arg756 participates in progesterone binding.

It belongs to the nuclear hormone receptor family. NR3 subfamily. In terms of assembly, interacts with SMARD1 and UNC45A. Interacts with CUEDC2; the interaction promotes ubiquitination, decreases sumoylation, and represses transcriptional activity. Interacts with PIAS3; the interaction promotes sumoylation of PR in a hormone-dependent manner, inhibits DNA-binding, and alters nuclear export. Interacts with SP1; the interaction requires ligand-induced phosphorylation on Ser-344. Interacts with PRMT2. Isoform A interacts with NCOR2. Isoform B (but not isoform A) interacts with NCOA2 and NCOA1. Isoform B (but not isoform A) interacts with KLF9. Interacts with GTF2B. Post-translationally, phosphorylated on multiple serine sites. Several of these sites are hormone-dependent. Phosphorylation on Ser-293 is highly hormone-dependent and modulates ubiquitination and sumoylation on Lys-387. Phosphorylation on Ser-344 also requires induction by hormone. Basal phosphorylation on Ser-82, Ser-190 and Ser-399 is increased in response to progesterone and can be phosphorylated in vitro by the CDK2-A1 complex. Increased levels of phosphorylation on Ser-399 also in the presence of EGF, heregulin, IGF, PMA and FBS. Phosphorylation at this site by CDK2 is ligand-independent, and increases nuclear translocation and transcriptional activity. Phosphorylation at Ser-293, but not at Ser-190, is impaired during the G(2)/M phase of the cell cycle. Phosphorylation on Ser-344 by ERK1/2 MAPK is required for interaction with SP1. Sumoylation is hormone-dependent and represses transcriptional activity. Sumoylation on all three sites is enhanced by PIAS3. Desumoylated by SENP1. Sumoylation on Lys-387, the main site of sumoylation, is repressed by ubiquitination on the same site, and modulated by phosphorylation at Ser-293. In terms of processing, ubiquitination is hormone-dependent and represses sumoylation on the same site. Promoted by MAPK-mediated phosphorylation on Ser-293. Ubiquitinated by UBR5, leading to its degradation: UBR5 specifically recognizes and binds ligand-bound PGR when it is not associated with coactivators (NCOAs). In presence of NCOAs, the UBR5-degron is not accessible, preventing its ubiquitination and degradation. Post-translationally, palmitoylated by ZDHHC7 and ZDHHC21. Palmitoylation is required for plasma membrane targeting and for rapid intracellular signaling via ERK and AKT kinases and cAMP generation. In terms of tissue distribution, isoform A and isoform B are expressed in the pituitary.

The protein localises to the nucleus. It localises to the cytoplasm. The steroid hormones and their receptors are involved in the regulation of eukaryotic gene expression and affect cellular proliferation and differentiation in target tissues. Depending on the isoform, progesterone receptor functions as a transcriptional activator or repressor. Functionally, ligand-dependent transdominant repressor of steroid hormone receptor transcriptional activity including repression of its isoform B, MR and ER. Transrepressional activity may involve recruitment of corepressor NCOR2. In terms of biological role, transcriptional activator of several progesteron-dependent promoters in a variety of cell types. Involved in activation of SRC-dependent MAPK signaling on hormone stimulation. This Rattus norvegicus (Rat) protein is Progesterone receptor (Pgr).